The chain runs to 141 residues: Large ribosomal subunit protein uL11 (141 aa).

Belongs to the universal ribosomal protein uL11 family. Part of the ribosomal stalk of the 50S ribosomal subunit. Interacts with L10 and the large rRNA to form the base of the stalk. L10 forms an elongated spine to which L12 dimers bind in a sequential fashion forming a multimeric L10(L12)X complex. Post-translationally, one or more lysine residues are methylated.

In terms of biological role, forms part of the ribosomal stalk which helps the ribosome interact with GTP-bound translation factors. The polypeptide is Large ribosomal subunit protein uL11 (Pediococcus pentosaceus (strain ATCC 25745 / CCUG 21536 / LMG 10740 / 183-1w)).